Consider the following 155-residue polypeptide: 6,7-dimethyl-8-ribityllumazine synthase (155 aa).

5-amino-6-(D-ribitylamino)uracil contacts are provided by residues Phe-23, 57 to 59, and 81 to 83; these read AFE and AVI. (2S)-2-hydroxy-3-oxobutyl phosphate is bound at residue 86-87; that stretch reads ST. His-89 serves as the catalytic Proton donor. Phe-114 lines the 5-amino-6-(D-ribitylamino)uracil pocket. Arg-128 contributes to the (2S)-2-hydroxy-3-oxobutyl phosphate binding site.

The protein belongs to the DMRL synthase family.

It carries out the reaction (2S)-2-hydroxy-3-oxobutyl phosphate + 5-amino-6-(D-ribitylamino)uracil = 6,7-dimethyl-8-(1-D-ribityl)lumazine + phosphate + 2 H2O + H(+). Its pathway is cofactor biosynthesis; riboflavin biosynthesis; riboflavin from 2-hydroxy-3-oxobutyl phosphate and 5-amino-6-(D-ribitylamino)uracil: step 1/2. Catalyzes the formation of 6,7-dimethyl-8-ribityllumazine by condensation of 5-amino-6-(D-ribitylamino)uracil with 3,4-dihydroxy-2-butanone 4-phosphate. This is the penultimate step in the biosynthesis of riboflavin. The protein is 6,7-dimethyl-8-ribityllumazine synthase of Geobacter sp. (strain M21).